The primary structure comprises 152 residues: Urease accessory protein UreE (152 aa).

It belongs to the UreE family.

Its subcellular location is the cytoplasm. Involved in urease metallocenter assembly. Binds nickel. Probably functions as a nickel donor during metallocenter assembly. This is Urease accessory protein UreE from Citrobacter koseri (strain ATCC BAA-895 / CDC 4225-83 / SGSC4696).